A 102-amino-acid polypeptide reads, in one-letter code: Large ribosomal subunit protein uL24 (102 aa).

Residues 44-65 (HAKPSQDNPQGGILNQEAPIHS) form a disordered region.

It belongs to the universal ribosomal protein uL24 family. In terms of assembly, part of the 50S ribosomal subunit.

Functionally, one of two assembly initiator proteins, it binds directly to the 5'-end of the 23S rRNA, where it nucleates assembly of the 50S subunit. In terms of biological role, one of the proteins that surrounds the polypeptide exit tunnel on the outside of the subunit. The chain is Large ribosomal subunit protein uL24 from Shouchella clausii (strain KSM-K16) (Alkalihalobacillus clausii).